The sequence spans 269 residues: GTP cyclohydrolase FolE2 2 (269 aa).

It belongs to the GTP cyclohydrolase IV family.

The enzyme catalyses GTP + H2O = 7,8-dihydroneopterin 3'-triphosphate + formate + H(+). It functions in the pathway cofactor biosynthesis; 7,8-dihydroneopterin triphosphate biosynthesis; 7,8-dihydroneopterin triphosphate from GTP: step 1/1. In terms of biological role, converts GTP to 7,8-dihydroneopterin triphosphate. The protein is GTP cyclohydrolase FolE2 2 of Burkholderia lata (strain ATCC 17760 / DSM 23089 / LMG 22485 / NCIMB 9086 / R18194 / 383).